Reading from the N-terminus, the 141-residue chain is HTH-type transcriptional repressor NsrR (141 aa).

The region spanning 2–129 (QLTNFTDFGL…DKHTIQDMLT (128 aa)) is the HTH rrf2-type domain. A DNA-binding region (H-T-H motif) is located at residues 28–51 (ITVVTETFDVSRNHMVKIINKLGQ). 3 residues coordinate [2Fe-2S] cluster: C91, C96, and C102.

The cofactor is [2Fe-2S] cluster.

Nitric oxide-sensitive repressor of genes involved in protecting the cell against nitrosative stress. May require iron for activity. The polypeptide is HTH-type transcriptional repressor NsrR (Aliivibrio fischeri (strain ATCC 700601 / ES114) (Vibrio fischeri)).